The following is a 465-amino-acid chain: Ribulose bisphosphate carboxylase large chain (465 aa).

K4 is modified (N6,N6,N6-trimethyllysine). Residues N113 and T163 each contribute to the substrate site. Residue K165 is the Proton acceptor of the active site. A substrate-binding site is contributed by K167. Mg(2+) is bound by residues K191, D193, and E194. K191 carries the N6-carboxylysine modification. Catalysis depends on H284, which acts as the Proton acceptor. Positions 285, 317, and 369 each coordinate substrate.

It belongs to the RuBisCO large chain family. Type I subfamily. In terms of assembly, heterohexadecamer of 8 large chains and 8 small chains; disulfide-linked. The disulfide link is formed within the large subunit homodimers. The cofactor is Mg(2+). In terms of processing, the disulfide bond which can form in the large chain dimeric partners within the hexadecamer appears to be associated with oxidative stress and protein turnover.

Its subcellular location is the plastid. It localises to the chloroplast. The catalysed reaction is 2 (2R)-3-phosphoglycerate + 2 H(+) = D-ribulose 1,5-bisphosphate + CO2 + H2O. The enzyme catalyses D-ribulose 1,5-bisphosphate + O2 = 2-phosphoglycolate + (2R)-3-phosphoglycerate + 2 H(+). In terms of biological role, ruBisCO catalyzes two reactions: the carboxylation of D-ribulose 1,5-bisphosphate, the primary event in carbon dioxide fixation, as well as the oxidative fragmentation of the pentose substrate in the photorespiration process. Both reactions occur simultaneously and in competition at the same active site. This is Ribulose bisphosphate carboxylase large chain from Passiflora quadrangularis (Grenadine).